Consider the following 906-residue polypeptide: Disintegrin and metalloproteinase domain-containing protein 22 (906 aa).

An N-terminal signal peptide occupies residues 1–25 (MQAAVAVSVPFLLLCVLGTCPPARC). The propeptide occupies 26-222 (GQAGDASLME…KFILKPRPKR (197 aa)). A glycan (N-linked (GlcNAc...) asparagine) is linked at Asn-175. Residues 223-736 (SKRQLRRYPR…LSGNGVAGTN (514 aa)) are Extracellular-facing. Residues 239–438 (KYIELMIVND…GGGACLFNKP (200 aa)) enclose the Peptidase M12B domain. Disulfide bonds link Cys-349–Cys-433, Cys-392–Cys-417, Cys-394–Cys-401, Cys-447–Cys-477, Cys-458–Cys-474, Cys-460–Cys-466, Cys-473–Cys-494, Cys-485–Cys-491, Cys-490–Cys-516, Cys-503–Cys-523, Cys-510–Cys-542, Cys-535–Cys-547, Cys-554–Cys-605, Cys-569–Cys-635, Cys-583–Cys-593, Cys-600–Cys-663, and Cys-657–Cys-668. Positions 444–531 (PPECGNGFIE…QCAPNIHKMD (88 aa)) constitute a Disintegrin domain. Residue Asn-519 is glycosylated (N-linked (GlcNAc...) asparagine). A glycan (N-linked (GlcNAc...) asparagine) is linked at Asn-634. A glycan (N-linked (GlcNAc...) asparagine) is linked at Asn-675. Residues 675–712 (NFSTCLSSKEGTICSGNGVCSNELKCVCNRHWIGSDCN) enclose the EGF-like domain. Cystine bridges form between Cys-679/Cys-694, Cys-688/Cys-700, and Cys-702/Cys-711. The helical transmembrane segment at 737–757 (IIIGIIAGTILVLALILGITA) threads the bilayer. Residues 758–906 (WGYKNYREQR…QSARLWETSI (149 aa)) are Cytoplasmic-facing. The disordered stretch occupies residues 785–906 (YSDIPPGVST…QSARLWETSI (122 aa)). Residues 793–810 (STNSASSSKKRSNGLSHS) show a composition bias toward low complexity. Ser-810 carries the post-translational modification Phosphoserine. Over residues 811 to 829 (WSERIPDTKHISDICENGR) the composition is skewed to basic and acidic residues. Position 834 is a phosphoserine (Ser-834). The span at 842–853 (NKKKIRGKRFRP) shows a compositional bias: basic residues. Residues Ser-857, Ser-862, Ser-866, and Ser-870 each carry the phosphoserine modification. Over residues 862–877 (SPAKSPSSSTGSIASS) the composition is skewed to low complexity.

Interacts with LGI1. Interacts with DLG4/PSD95. Also binds LGI4. Interacts with KCNA2 and DLG2. Interacts with ADAM11. Interacts (via C-terminus) with YWHAB/14-3-3 beta. Interacts (via C-terminus) with YWHAZ/14-3-3 zeta. The precursor is cleaved by a furin endopeptidase. As to expression, highly expressed in the brain and in some high-grade but not low-grade gliomas. Detected slightly or not at all in other tissues.

The protein resides in the cell membrane. It localises to the cell projection. It is found in the axon. In terms of biological role, probable ligand for integrin in the brain. This is a non catalytic metalloprotease-like protein. Involved in regulation of cell adhesion and spreading and in inhibition of cell proliferation. Neuronal receptor for LGI1. The sequence is that of Disintegrin and metalloproteinase domain-containing protein 22 (ADAM22) from Homo sapiens (Human).